The primary structure comprises 214 residues: Adenylate kinase (214 aa).

10–15 (GAGKGT) provides a ligand contact to ATP. Positions 30–59 (ATGDVLRAAVKEGTPLGLEAKAAMDRGDLV) are NMP. AMP-binding positions include Thr-31, Arg-36, 57 to 59 (DLV), and Gln-92. The segment at 126–161 (GRTTCEACQRPFFGRQPGETCTEGGVSGTLVRRKDD) is LID. Arg-127 provides a ligand contact to ATP. 2 residues coordinate AMP: Arg-158 and Arg-169. Gly-198 is an ATP binding site.

It belongs to the adenylate kinase family. Monomer.

The protein resides in the cytoplasm. It catalyses the reaction AMP + ATP = 2 ADP. The protein operates within purine metabolism; AMP biosynthesis via salvage pathway; AMP from ADP: step 1/1. Its function is as follows. Catalyzes the reversible transfer of the terminal phosphate group between ATP and AMP. Plays an important role in cellular energy homeostasis and in adenine nucleotide metabolism. The chain is Adenylate kinase from Gemmatimonas aurantiaca (strain DSM 14586 / JCM 11422 / NBRC 100505 / T-27).